Consider the following 801-residue polypeptide: MRCPSLARLPHRAISGLTRLPVRLQSQTFLYQRCASTAALRSPTAGPAYQSILNRHNLQRRNASAAAAAVLEAAASNPDALTQEAIIDNLDPVEATRLSRIRNIGIAAHIDSGKTTCTERILFYTGRIKAIHEVRGRDNVGAKMDSMDLEREKGITIQSAATFCDWVKKEDDGREEKYHINLIDTPGHIDFTIEVERALRVLDGAVMILCAVSGVQSQTITVDRQMRRYNVPRISFINKMDRMGANPFKAVDQINSKLKIPAAAVQVPIGAEDEFEGVVDLIRMKSIYNHGPSGEEIVIKDEIPEKVKSVVEERRRMLIETLADVDDEIAELFLDEKEPTQEQLKAAIRRATVGLKFTPVFMGTALSNKSVQPMLDGVIDYLPNPSEIENLALDQKRNEASVKLVPYNSQPFVGLAFKLEESNFGQLTYIRVYQGTLRKGANVFNARNNKKVKIPRIVRMHSNEMEEVSEIGAGEICAVFGVDCASGDSFTDGQLGYTMTSMFVPEPVISLSIKPKNNKDSANFSKAMARFQREDPTFRVTYDAESEQTLISGMGELHLDIYIERMRREYRVDCETGPPQVAYRETIGNKVEFDHLLKKQSGGPGDYARVVGWMEPTDKLEENKFEEQIVGGSISEKFLFACEKGFNLACEKGPLIGHKVLGTRMVINDGATHMTDSSEMSFKNATQQAFRKAFMESNPSVLEPMMKTVVTAPSEFQGDVISLLNKRNATINDTETGVDEFTVYADCSLNGMFGFSSHLRAATQGKGEYTMEFSHYEKAQPQLQKELIQKYLKAQADRHKK.

The transit peptide at 1–24 directs the protein to the mitochondrion; that stretch reads MRCPSLARLPHRAISGLTRLPVRL. One can recognise a tr-type G domain in the interval 99–386; sequence SRIRNIGIAA…GVIDYLPNPS (288 aa). GTP contacts are provided by residues 108–115, 184–188, and 238–241; these read AHIDSGKT, DTPGH, and NKMD.

The protein belongs to the TRAFAC class translation factor GTPase superfamily. Classic translation factor GTPase family. EF-G/EF-2 subfamily.

The protein resides in the mitochondrion. It participates in protein biosynthesis; polypeptide chain elongation. Functionally, mitochondrial GTPase that catalyzes the GTP-dependent ribosomal translocation step during translation elongation. During this step, the ribosome changes from the pre-translocational (PRE) to the post-translocational (POST) state as the newly formed A-site-bound peptidyl-tRNA and P-site-bound deacylated tRNA move to the P and E sites, respectively. Catalyzes the coordinated movement of the two tRNA molecules, the mRNA and conformational changes in the ribosome. The sequence is that of Elongation factor G, mitochondrial (mef1) from Aspergillus clavatus (strain ATCC 1007 / CBS 513.65 / DSM 816 / NCTC 3887 / NRRL 1 / QM 1276 / 107).